The sequence spans 413 residues: Na(+)/H(+) antiporter NhaA (413 aa).

11 consecutive transmembrane segments (helical) span residues 15–35, 57–77, 93–113, 123–143, 152–172, 175–195, 211–231, 261–281, 295–315, 333–353, and 364–384; these read LESG…ALFV, LLHW…GLEI, ALPC…YASL, GWAI…SLLG, IFLA…IAVF, AELN…LLGF, VALW…GVVL, WVAF…SFAG, VALG…WLAI, GVSL…LLAF, and VGVL…LSLT.

Belongs to the NhaA Na(+)/H(+) (TC 2.A.33) antiporter family.

The protein resides in the cell inner membrane. It catalyses the reaction Na(+)(in) + 2 H(+)(out) = Na(+)(out) + 2 H(+)(in). Its function is as follows. Na(+)/H(+) antiporter that extrudes sodium in exchange for external protons. This Caulobacter vibrioides (strain ATCC 19089 / CIP 103742 / CB 15) (Caulobacter crescentus) protein is Na(+)/H(+) antiporter NhaA.